Consider the following 597-residue polypeptide: Kelch-like protein 21 (597 aa).

One can recognise a BTB domain in the interval 35–103; sequence LDVTLEAAGG…SYTGRVAVSG (69 aa). Residues 138–239 form the BACK domain; the sequence is CLDMQDFAEA…RRFYLLAHVE (102 aa). Kelch repeat units follow at residues 287–335, 336–382, 384–422, 423–470, 472–512, and 513–560; these read ILVL…ALGN, DIYV…VLDG, LYVV…ACRG, RLYA…TLNG, MYFV…VLGG, and KLYV…SIFR. A disordered region spans residues 570–597; sequence GRGFELDSGSDDMDPGRPRPPRDPDELH. Residues 583 to 597 are compositionally biased toward basic and acidic residues; sequence DPGRPRPPRDPDELH.

Component of the BCR(KLHL21) E3 ubiquitin ligase complex, at least composed of CUL3, KLHL21 and RBX1.

The protein resides in the cytoplasm. The protein localises to the cytoskeleton. It is found in the spindle. It participates in protein modification; protein ubiquitination. In terms of biological role, substrate-specific adapter of a BCR (BTB-CUL3-RBX1) E3 ubiquitin-protein ligase complex required for efficient chromosome alignment and cytokinesis. The BCR(KLHL21) E3 ubiquitin ligase complex regulates localization of the chromosomal passenger complex (CPC) from chromosomes to the spindle midzone in anaphase and mediates the ubiquitination of AURKB. Ubiquitination of AURKB by BCR(KLHL21) E3 ubiquitin ligase complex may not lead to its degradation by the proteasome. The protein is Kelch-like protein 21 (KLHL21) of Homo sapiens (Human).